The primary structure comprises 292 residues: 4-hydroxy-tetrahydrodipicolinate synthase (292 aa).

Thr-50 serves as a coordination point for pyruvate. Tyr-139 acts as the Proton donor/acceptor in catalysis. The active-site Schiff-base intermediate with substrate is Lys-167. Ile-208 is a binding site for pyruvate.

The protein belongs to the DapA family. As to quaternary structure, homotetramer; dimer of dimers.

It is found in the cytoplasm. The catalysed reaction is L-aspartate 4-semialdehyde + pyruvate = (2S,4S)-4-hydroxy-2,3,4,5-tetrahydrodipicolinate + H2O + H(+). It participates in amino-acid biosynthesis; L-lysine biosynthesis via DAP pathway; (S)-tetrahydrodipicolinate from L-aspartate: step 3/4. Catalyzes the condensation of (S)-aspartate-beta-semialdehyde [(S)-ASA] and pyruvate to 4-hydroxy-tetrahydrodipicolinate (HTPA). This chain is 4-hydroxy-tetrahydrodipicolinate synthase, found in Oenococcus oeni (strain ATCC BAA-331 / PSU-1).